Here is a 655-residue protein sequence, read N- to C-terminus: D-xylonate dehydratase YagF (655 aa).

It belongs to the IlvD/Edd family.

It carries out the reaction D-xylonate = 2-dehydro-3-deoxy-D-arabinonate + H2O. Catalyzes the dehydration of D-xylonic acid to form 2-dehydro-3-deoxy-D-pentonate. This is D-xylonate dehydratase YagF (yagF) from Escherichia coli (strain K12).